The following is a 682-amino-acid chain: DNA-directed RNA polymerase subunit beta' (682 aa).

Positions 69, 71, 87, and 90 each coordinate Zn(2+). Residues D491, D493, and D495 each coordinate Mg(2+).

Belongs to the RNA polymerase beta' chain family. RpoC1 subfamily. In terms of assembly, in plastids the minimal PEP RNA polymerase catalytic core is composed of four subunits: alpha, beta, beta', and beta''. When a (nuclear-encoded) sigma factor is associated with the core the holoenzyme is formed, which can initiate transcription. Mg(2+) serves as cofactor. Zn(2+) is required as a cofactor.

Its subcellular location is the plastid. It localises to the chloroplast. The enzyme catalyses RNA(n) + a ribonucleoside 5'-triphosphate = RNA(n+1) + diphosphate. DNA-dependent RNA polymerase catalyzes the transcription of DNA into RNA using the four ribonucleoside triphosphates as substrates. This Lotus japonicus (Lotus corniculatus var. japonicus) protein is DNA-directed RNA polymerase subunit beta'.